Here is an 86-residue protein sequence, read N- to C-terminus: Cardiotoxin homolog TA-ctx-like (86 aa).

An N-terminal signal peptide occupies residues 1–21; it reads MKTLLLTLVVLTIACLDLGYT. Disulfide bonds link Cys-24–Cys-45, Cys-38–Cys-62, Cys-66–Cys-78, and Cys-79–Cys-84.

It belongs to the three-finger toxin family. Short-chain subfamily. Orphan group IX sub-subfamily. As to expression, expressed by the venom gland.

Its subcellular location is the secreted. This is Cardiotoxin homolog TA-ctx-like from Bungarus multicinctus (Many-banded krait).